Reading from the N-terminus, the 322-residue chain is Cytochrome f (322 aa).

The first 36 residues, 1–36 (MQKNRNTFSWVKEQMTRCISVSMMIYVITRASISNA), serve as a signal peptide directing secretion. Heme contacts are provided by Y37, C57, C60, and H61. The helical transmembrane segment at 288-308 (IQGLLFFLASVILAQIFLVLK) threads the bilayer.

The protein belongs to the cytochrome f family. As to quaternary structure, the 4 large subunits of the cytochrome b6-f complex are cytochrome b6, subunit IV (17 kDa polypeptide, petD), cytochrome f and the Rieske protein, while the 4 small subunits are PetG, PetL, PetM and PetN. The complex functions as a dimer. It depends on heme as a cofactor.

The protein resides in the plastid. It is found in the chloroplast thylakoid membrane. Its function is as follows. Component of the cytochrome b6-f complex, which mediates electron transfer between photosystem II (PSII) and photosystem I (PSI), cyclic electron flow around PSI, and state transitions. The protein is Cytochrome f of Nymphaea alba (White water-lily).